A 319-amino-acid polypeptide reads, in one-letter code: Aspartate carbamoyltransferase catalytic subunit (319 aa).

Carbamoyl phosphate-binding residues include Arg65 and Thr66. Lys93 contributes to the L-aspartate binding site. 3 residues coordinate carbamoyl phosphate: Arg115, His143, and Gln146. L-aspartate contacts are provided by Arg176 and Arg230. Positions 271 and 272 each coordinate carbamoyl phosphate.

Belongs to the aspartate/ornithine carbamoyltransferase superfamily. ATCase family. In terms of assembly, heterododecamer (2C3:3R2) of six catalytic PyrB chains organized as two trimers (C3), and six regulatory PyrI chains organized as three dimers (R2).

It catalyses the reaction carbamoyl phosphate + L-aspartate = N-carbamoyl-L-aspartate + phosphate + H(+). It functions in the pathway pyrimidine metabolism; UMP biosynthesis via de novo pathway; (S)-dihydroorotate from bicarbonate: step 2/3. Its function is as follows. Catalyzes the condensation of carbamoyl phosphate and aspartate to form carbamoyl aspartate and inorganic phosphate, the committed step in the de novo pyrimidine nucleotide biosynthesis pathway. In Chelativorans sp. (strain BNC1), this protein is Aspartate carbamoyltransferase catalytic subunit.